Reading from the N-terminus, the 217-residue chain is Large ribosomal subunit protein uL1 (217 aa).

Belongs to the universal ribosomal protein uL1 family. In terms of assembly, part of the 50S ribosomal subunit.

Binds directly to 23S rRNA. Probably involved in E site tRNA release. Functionally, protein L1 is also a translational repressor protein, it controls the translation of its operon by binding to its mRNA. The chain is Large ribosomal subunit protein uL1 from Thermoplasma volcanium (strain ATCC 51530 / DSM 4299 / JCM 9571 / NBRC 15438 / GSS1).